We begin with the raw amino-acid sequence, 1103 residues long: Isoleucine--tRNA ligase (1103 aa).

The 'HIGH' region motif lies at 53–63 (PFANGLPHYGH). Residues 628-632 (KLSKR) carry the 'KMSKS' region motif. K631 contributes to the ATP binding site.

Belongs to the class-I aminoacyl-tRNA synthetase family. IleS type 2 subfamily. In terms of assembly, monomer. Requires Zn(2+) as cofactor.

The protein resides in the cytoplasm. It catalyses the reaction tRNA(Ile) + L-isoleucine + ATP = L-isoleucyl-tRNA(Ile) + AMP + diphosphate. Functionally, catalyzes the attachment of isoleucine to tRNA(Ile). As IleRS can inadvertently accommodate and process structurally similar amino acids such as valine, to avoid such errors it has two additional distinct tRNA(Ile)-dependent editing activities. One activity is designated as 'pretransfer' editing and involves the hydrolysis of activated Val-AMP. The other activity is designated 'posttransfer' editing and involves deacylation of mischarged Val-tRNA(Ile). This chain is Isoleucine--tRNA ligase, found in Rickettsia akari (strain Hartford).